The primary structure comprises 124 residues: CLAVATA3/ESR (CLE)-related protein 45 (124 aa).

The N-terminal stretch at 1–20 (MLGSSTRSMFFLLVCIGLLA) is a signal peptide. N-linked (GlcNAc...) asparagine glycans are attached at residues N25 and N96. Residues 71 to 109 (LNKNRRVLEEVNKDKIKAEETQERKNKTEDSFKSSKRRV) adopt a coiled-coil conformation. Residues 87-103 (KAEETQERKNKTEDSFK) are compositionally biased toward basic and acidic residues. Residues 87–124 (KAEETQERKNKTEDSFKSSKRRVRRGSDPIHNKAQPFS) are disordered.

The protein belongs to the CLV3/ESR signal peptide family. Binds to SKM1 present in the pollen grain, particularly under relatively high temperature (at 30 degrees Celsius). Interacts with BAM3, especially in roots. Expressed at low levels in flowers, especially in pistils. Present in vascular tissues. In roots, confined to protophloem and sieve element precursor cells.

The protein resides in the secreted. It localises to the extracellular space. Its function is as follows. Extracellular signal peptide that regulates cell fate. Represses root apical meristem maintenance. Represses protophloem differentiation in a BAM3-dependent manner. BRX, BAM3, and CLE45 act together to regulate the transition of protophloem cells from proliferation to differentiation, thus impinging on postembryonic growth capacity of the root meristem; this signaling pathway requires CRN and CLV2 and involves MAKR5 for its transduction/amplification. Triggers the accumulation of MAKR5 in developing sieve elements in a BAM3-dependent manner. Prevents, in a dose-dependent manner, auxin response in the root meristem thus leading in the repression of protophloem differentiation and periclinal sieve element precursor cell division. Promotes pollen tube growth prolongation in a SKM1 and SKM2-dependent manner, especially under relatively high temperature (at 30 degrees Celsius), thus conferring tolerance against high temperature probably through the maintenance of mitochondrial activity. Alleviates mitochondrial decay pollen tube in vitro culture. The polypeptide is CLAVATA3/ESR (CLE)-related protein 45 (Arabidopsis thaliana (Mouse-ear cress)).